Reading from the N-terminus, the 514-residue chain is MQQLNPSEISEIIKGRIEKLDVTSQARNEGTVVSVSDGIVRIHGLADVMYGEMIEFPGGVYGMALNLEQDSVGAVVLGAYTTLAEGMSAKCTGRILEVPVGKELLGRVVDALGNPVDGKGPLGNTETDAVEKVAPGVIWRKSVDQPVQTGYKAVDAMIPVGRGQRELIIGDRQIGKTALAIDAIINQKDSGIFCVYVAIGQKQSTIANVVRKLEENGALANTIIVAASASESAALQFLAPYSGCTMGEFFRDRGEDALIVYDDLSKQAVAYRQISLLLRRPPGREAYPGDVFYLHSRLLERASRVSEEYVEKFTNGAVTGKTGSLTALPIIETQAGDVSAFVPTNVISITDGQIFLESAMFNSGIRPAVNAGVSVSRVGGAAQTKIIKKLSGGIRTALAQYRELAAFAQFASDLDEATRKQLEHGQRVTELMKQKQYAPMSIADMSLSLYAAERGFLTDIEITKIGSFEQALIAFFNRDHADLMAKINVKGDFNDEIDAGLKAGIEKFKATQTW.

170 to 177 (GDRQIGKT) lines the ATP pocket.

Belongs to the ATPase alpha/beta chains family. F-type ATPases have 2 components, CF(1) - the catalytic core - and CF(0) - the membrane proton channel. CF(1) has five subunits: alpha(3), beta(3), gamma(1), delta(1), epsilon(1). CF(0) has three main subunits: a(1), b(2) and c(9-12). The alpha and beta chains form an alternating ring which encloses part of the gamma chain. CF(1) is attached to CF(0) by a central stalk formed by the gamma and epsilon chains, while a peripheral stalk is formed by the delta and b chains.

It is found in the cell inner membrane. The catalysed reaction is ATP + H2O + 4 H(+)(in) = ADP + phosphate + 5 H(+)(out). Its function is as follows. Produces ATP from ADP in the presence of a proton gradient across the membrane. The alpha chain is a regulatory subunit. The chain is ATP synthase subunit alpha from Pseudomonas fluorescens (strain Pf0-1).